Consider the following 214-residue polypeptide: Oocyte zinc finger protein XlCOF10 (214 aa).

C2H2-type zinc fingers lie at residues 1-23 (FSCSQCDESFVQRSELELHRQLH), 29-51 (FTCSECGKCFKRFSLLKEHHRIH), 57-79 (FTCDECGKCFTQKSHMTAHQKSH), 85-107 (FCCSECGKHFKQNSQLVVHQRTH), 113-135 (FTCTESGQWFKLQSYLTEHQKSH), 141-163 (FSCSDCGKCFKRHSLFIEHQRIH), and 169-191 (FSCSVCEKTFTRRSHLTAHEKCH).

This sequence belongs to the krueppel C2H2-type zinc-finger protein family.

It is found in the nucleus. May be involved in transcriptional regulation. The polypeptide is Oocyte zinc finger protein XlCOF10 (Xenopus laevis (African clawed frog)).